A 430-amino-acid chain; its full sequence is uncharacterized protein (430 aa).

Residues 1–19 (MKILLFVVLFFNVLVGIYS) form the signal peptide. N39 carries N-linked (GlcNAc...) asparagine glycosylation. Residues 119-408 (LDPNSSPSPS…ELLEKNSDGN (290 aa)) are disordered. Over residues 124–168 (SPSPSPSPSPSPSPSPSPSPSPSPSPSPSPSPSPSPSPSPSPSPS) the composition is skewed to pro residues. 2 stretches are compositionally biased toward low complexity: residues 169–253 (PSSS…TPSQ) and 263–285 (PTPT…TQTP). A compositionally biased stretch (polar residues) spans 286-303 (ISSRPMSISTEKPSSSEE). N312 carries N-linked (GlcNAc...) asparagine glycosylation. Residues 316–325 (SEDKKKDSES) show a composition bias toward basic and acidic residues. Residues 326 to 370 (KSSQSESPSPSASASESESASESASASTSVSVSASPLPIMDSSSS) show a composition bias toward low complexity. N408 is a glycosylation site (N-linked (GlcNAc...) asparagine).

Its subcellular location is the secreted. This is an uncharacterized protein from Dictyostelium discoideum (Social amoeba).